The sequence spans 423 residues: Diels-Alderase cheD (423 aa).

The N-terminal stretch at 1–18 (MKLCALFAGAVISTSAVA) is a signal peptide. N-linked (GlcNAc...) asparagine glycosylation is found at Asn-84 and Asn-132.

Belongs to the Diels-Alderase family.

The protein operates within secondary metabolite biosynthesis. Functionally, diels-Alderase; part of the gene cluster that mediates the biosynthesis of chaetoglobosin A which has a unique inhibitory activity against actin polymerization in mammalian cells. Chaetoglobosin A and its intermediates are involved in the morphological differentiation of C.globosum. The first step of the pathway is the synthesis of prochaetoglobosin I via condensation of one acetyl-CoA, 8 malonyl-CoA, and a L-tryptophan molecule by the PKS-NRPS hybrid synthetase cheA, followed by reduction of backbone double bond to install desired geometry by the enoyl reductase cheB. Further multiple oxidation steps performed by the cytochrome P450 monooxygenases cheE and cheG, as well as by the FAD-linked oxidoreductase cheF, lead to the formation of chaetoglobosin A. Depending on the order of action of these reductases, distinct intermediates can be identified. Within the pathway, the cytochrome P450 monooxygenase cheE catalyzes a stereospecific epoxidation on prochaetoglobosin I, cytoglobosin D, and chaetoglobosin J intermediates. The FAD-linked oxidoreductase cheF performs dehydrogenation of the C-20 hydroxyl groups in the 20-dihyrochaetoglobosin A and cytoglobosin D intermediates. Finally, the cytochrome P450 monooxygenase cheG can catalyze the stereospecific dihydroxylation of prochaetoglobosin I and prochaetoglobosin IV at C-19 and C-20, respectively. The Diels-Alderase cheD may play a role in the post-PKS-NRPS biosynthetic steps catalyzing Diels-Alder cyclization. This chain is Diels-Alderase cheD, found in Chaetomium globosum (strain ATCC 6205 / CBS 148.51 / DSM 1962 / NBRC 6347 / NRRL 1970) (Soil fungus).